The chain runs to 334 residues: Glucokinase-like protein PD_0680 (334 aa).

18–23 lines the ATP pocket; that stretch reads ADVGGT.

This sequence belongs to the bacterial glucokinase family.

The protein is Glucokinase-like protein PD_0680 of Xylella fastidiosa (strain Temecula1 / ATCC 700964).